Here is a 211-residue protein sequence, read N- to C-terminus: Ras-related protein Rab-38 (211 aa).

GTP contacts are provided by Gly19, Val20, Gly21, Lys22, Thr23, Ser24, Ser35, Ser36, Tyr38, and Thr41. Thr23 contributes to the Mg(2+) binding site. The Switch 1 motif lies at 32–46 (QNFSSHYRATIGVDF). Thr41 and Asp65 together coordinate Mg(2+). Residues Gly68, Lys128, Asp130, Ala160, and Lys161 each coordinate GTP. Residues 68-81 (GQERFGNMTRVYYR) carry the Switch 2 motif. The S-palmitoyl cysteine moiety is linked to residue Cys205. Cys208 carries the S-geranylgeranyl cysteine lipid modification.

This sequence belongs to the small GTPase superfamily. Rab family. Interacts with ANKRD27. It depends on Mg(2+) as a cofactor. In terms of processing, although at least one in vitro system can process and methylate the prenylated C-terminal, in an in vitro system that normally express Rab-38 and in vivo the prenylated C-terminal is not proteolytically processed and not methylated. As to expression, expressed in melanocytes.

It localises to the cell membrane. The protein resides in the melanosome. Its subcellular location is the cytoplasmic vesicle. It is found in the phagosome. The protein localises to the phagosome membrane. It localises to the melanosome membrane. It carries out the reaction GTP + H2O = GDP + phosphate + H(+). With respect to regulation, regulated by guanine nucleotide exchange factors (GEFs) including the BLOC-3 complex composed of HPS1 and HPS4 which promote the exchange of bound GDP for free GTP. Regulated by GTPase activating proteins (GAPs) including SGSM2 which increase the GTP hydrolysis activity. Inhibited by GDP dissociation inhibitors (GDIs). Functionally, the small GTPases Rab are key regulators of intracellular membrane trafficking, from the formation of transport vesicles to their fusion with membranes. Rabs cycle between an inactive GDP-bound form and an active GTP-bound form that is able to recruit to membranes different sets of downstream effectors directly responsible for vesicle formation, movement, tethering and fusion. RAB38 may be involved in melanosomal transport and docking. Involved in the proper sorting of TYRP1. Involved in peripheral melanosomal distribution of TYRP1 in melanocytes; the function, which probably is implicating vesicle-trafficking, includes cooperation with ANKRD27 and VAMP7. Plays a role in the maturation of phagosomes that engulf pathogens, such as S.aureus and M.tuberculosis. Plays an important role in the control of melanin production and melanosome biogenesis. In concert with RAB32, regulates the proper trafficking of melanogenic enzymes TYR, TYRP1 and DCT/TYRP2 to melanosomes in melanocytes. This Homo sapiens (Human) protein is Ras-related protein Rab-38.